Here is a 224-residue protein sequence, read N- to C-terminus: Precorrin-2 dehydrogenase (224 aa).

NAD(+) contacts are provided by residues 26–27 (SV) and 47–50 (EFSQ).

It belongs to the precorrin-2 dehydrogenase / sirohydrochlorin ferrochelatase family. Homodimer.

It catalyses the reaction precorrin-2 + NAD(+) = sirohydrochlorin + NADH + 2 H(+). It participates in porphyrin-containing compound metabolism; siroheme biosynthesis; sirohydrochlorin from precorrin-2: step 1/1. Its function is as follows. Involved in the archaeal biosynthesis of heme. Catalyzes the oxiation of precorrin-2 into sirohydroclorin. This chain is Precorrin-2 dehydrogenase, found in Methanosarcina barkeri (strain Fusaro / DSM 804).